Consider the following 313-residue polypeptide: tRNA dimethylallyltransferase (313 aa).

10–17 (GPTAVGKT) provides a ligand contact to ATP. 12 to 17 (TAVGKT) contributes to the substrate binding site. The tract at residues 35 to 38 (DSMQ) is interaction with substrate tRNA.

Belongs to the IPP transferase family. As to quaternary structure, monomer. It depends on Mg(2+) as a cofactor.

The enzyme catalyses adenosine(37) in tRNA + dimethylallyl diphosphate = N(6)-dimethylallyladenosine(37) in tRNA + diphosphate. In terms of biological role, catalyzes the transfer of a dimethylallyl group onto the adenine at position 37 in tRNAs that read codons beginning with uridine, leading to the formation of N6-(dimethylallyl)adenosine (i(6)A). The chain is tRNA dimethylallyltransferase from Alkaliphilus oremlandii (strain OhILAs) (Clostridium oremlandii (strain OhILAs)).